The following is a 492-amino-acid chain: Steroid 21-hydroxylase (492 aa).

2 residues coordinate heme b: Arg91 and Lys120. Arg231 is a binding site for 17alpha-hydroxyprogesterone. Arg231 is a binding site for progesterone. The heme b site is built by His363, Arg424, and Cys426.

It belongs to the cytochrome P450 family. The cofactor is heme b.

The protein resides in the endoplasmic reticulum membrane. It localises to the microsome membrane. The catalysed reaction is 17alpha-hydroxyprogesterone + reduced [NADPH--hemoprotein reductase] + O2 = 11-deoxycortisol + oxidized [NADPH--hemoprotein reductase] + H2O + H(+). It carries out the reaction progesterone + reduced [NADPH--hemoprotein reductase] + O2 = 21-hydroxyprogesterone + oxidized [NADPH--hemoprotein reductase] + H2O + H(+). Functionally, specifically catalyzes the 21-hydroxylation of steroids. Required for the adrenal synthesis of mineralocorticoids and glucocorticoids. The polypeptide is Steroid 21-hydroxylase (CYP21) (Lynx lynx (Eurasian lynx)).